Here is a 513-residue protein sequence, read N- to C-terminus: Putative BTB/POZ domain-containing protein L55 (513 aa).

One can recognise a BTB domain in the interval 11-83; the sequence is SPIKIILQDI…FHGYKMEISD (73 aa).

It belongs to the mimivirus BTB/WD family.

The polypeptide is Putative BTB/POZ domain-containing protein L55 (Acanthamoeba polyphaga (Amoeba)).